The sequence spans 251 residues: MTKTEKKLRHYITKAIADYKLLDKGDKAMLCLSGGKDSFGLLKVLHGLIEDKTYDIDLHVYTLDQSQPGWDDSQLRKYLDDLGVSYEIETKNTYGVVIDKVPEGKTYCSLCSRLRRGNIYRYAKEHKMDKIILGHHRDDLIQSLLMSILYQGQIKSMPPKFVTQDGENTVIRPMVLVQERDLIEFAKEENFPIIPCNLCGSQENLKRKKVKKLIQDLALENPKVPSNILNSLSNVLPSHLMDKNLLNSLEN.

The short motif at 33–38 (SGGKDS) is the PP-loop motif element. [4Fe-4S] cluster-binding residues include C108, C111, and C199.

It belongs to the TtcA family. As to quaternary structure, homodimer. Mg(2+) serves as cofactor. It depends on [4Fe-4S] cluster as a cofactor.

The protein localises to the cytoplasm. It carries out the reaction cytidine(32) in tRNA + S-sulfanyl-L-cysteinyl-[cysteine desulfurase] + AH2 + ATP = 2-thiocytidine(32) in tRNA + L-cysteinyl-[cysteine desulfurase] + A + AMP + diphosphate + H(+). The protein operates within tRNA modification. Its function is as follows. Catalyzes the ATP-dependent 2-thiolation of cytidine in position 32 of tRNA, to form 2-thiocytidine (s(2)C32). The sulfur atoms are provided by the cysteine/cysteine desulfurase (IscS) system. The sequence is that of tRNA-cytidine(32) 2-sulfurtransferase 1 from Francisella tularensis subsp. holarctica (strain FTNF002-00 / FTA).